The sequence spans 443 residues: Amino-acid acetyltransferase (443 aa).

In terms of domain architecture, N-acetyltransferase spans 296–434; that stretch reads EQIRRATIND…KKLMYNYQRR (139 aa).

Belongs to the acetyltransferase family. ArgA subfamily. Homohexamer.

The protein localises to the cytoplasm. The enzyme catalyses L-glutamate + acetyl-CoA = N-acetyl-L-glutamate + CoA + H(+). Its pathway is amino-acid biosynthesis; L-arginine biosynthesis; N(2)-acetyl-L-ornithine from L-glutamate: step 1/4. The protein is Amino-acid acetyltransferase of Escherichia fergusonii (strain ATCC 35469 / DSM 13698 / CCUG 18766 / IAM 14443 / JCM 21226 / LMG 7866 / NBRC 102419 / NCTC 12128 / CDC 0568-73).